Consider the following 353-residue polypeptide: RNA 3'-terminal phosphate cyclase (353 aa).

ATP is bound by residues Gln103 and 297-301 (HLADQ). His322 serves as the catalytic Tele-AMP-histidine intermediate.

It belongs to the RNA 3'-terminal cyclase family. Type 1 subfamily.

It localises to the cytoplasm. It catalyses the reaction a 3'-end 3'-phospho-ribonucleotide-RNA + ATP = a 3'-end 2',3'-cyclophospho-ribonucleotide-RNA + AMP + diphosphate. Its function is as follows. Catalyzes the conversion of 3'-phosphate to a 2',3'-cyclic phosphodiester at the end of RNA. The mechanism of action of the enzyme occurs in 3 steps: (A) adenylation of the enzyme by ATP; (B) transfer of adenylate to an RNA-N3'P to produce RNA-N3'PP5'A; (C) and attack of the adjacent 2'-hydroxyl on the 3'-phosphorus in the diester linkage to produce the cyclic end product. The biological role of this enzyme is unknown but it is likely to function in some aspects of cellular RNA processing. The sequence is that of RNA 3'-terminal phosphate cyclase from Salmonella heidelberg (strain SL476).